The chain runs to 137 residues: Probable disulfide formation protein C (137 aa).

Residues glutamate 6 to tyrosine 25 traverse the membrane as a helical segment. Residues cysteine 35 and cysteine 38 are joined by a disulfide bond. Helical transmembrane passes span tyrosine 40 to arginine 59 and tyrosine 66 to serine 83. A disulfide bridge links cysteine 97 with cysteine 102. The chain crosses the membrane as a helical span at residues glycine 111–isoleucine 133.

This sequence belongs to the DsbB family. BdbC subfamily.

Its subcellular location is the cell membrane. Functionally, required for disulfide bond formation in some proteins. This is Probable disulfide formation protein C from Halalkalibacterium halodurans (strain ATCC BAA-125 / DSM 18197 / FERM 7344 / JCM 9153 / C-125) (Bacillus halodurans).